The following is a 580-amino-acid chain: Putative Xaa-Pro dipeptidyl-peptidase (580 aa).

Catalysis depends on charge relay system residues serine 207, aspartate 319, and histidine 350.

Belongs to the peptidase S15 family.

It carries out the reaction Hydrolyzes Xaa-Pro-|- bonds to release unblocked, N-terminal dipeptides from substrates including Ala-Pro-|-p-nitroanilide and (sequentially) Tyr-Pro-|-Phe-Pro-|-Gly-Pro-|-Ile.. This chain is Putative Xaa-Pro dipeptidyl-peptidase, found in Bacillus cereus (strain ATCC 14579 / DSM 31 / CCUG 7414 / JCM 2152 / NBRC 15305 / NCIMB 9373 / NCTC 2599 / NRRL B-3711).